We begin with the raw amino-acid sequence, 275 residues long: NH(3)-dependent NAD(+) synthetase (275 aa).

46–53 (GISGGQDS) contributes to the ATP binding site. Aspartate 52 lines the Mg(2+) pocket. A deamido-NAD(+)-binding site is contributed by arginine 140. Residue threonine 160 participates in ATP binding. Glutamate 165 contacts Mg(2+). 2 residues coordinate deamido-NAD(+): lysine 173 and aspartate 180. ATP is bound by residues lysine 189 and threonine 211. 260-261 (HK) contributes to the deamido-NAD(+) binding site.

Belongs to the NAD synthetase family. As to quaternary structure, homodimer.

The enzyme catalyses deamido-NAD(+) + NH4(+) + ATP = AMP + diphosphate + NAD(+) + H(+). Its pathway is cofactor biosynthesis; NAD(+) biosynthesis; NAD(+) from deamido-NAD(+) (ammonia route): step 1/1. In terms of biological role, catalyzes the ATP-dependent amidation of deamido-NAD to form NAD. Uses ammonia as a nitrogen source. The sequence is that of NH(3)-dependent NAD(+) synthetase from Escherichia coli O127:H6 (strain E2348/69 / EPEC).